The chain runs to 579 residues: Vitamin B6 transporter TPN1 (579 aa).

Helical transmembrane passes span 99–119 (TGGLSSMSSFLLGPLLFGLSF), 123–143 (LASSLISVTIGCLIAAYCSIM), 158–178 (LFGWWFVKLVALASIIGVMGW), 199–219 (PLWVGIVIVTVCSFLVAIFGI), 222–242 (VIKVETYLSVPVLTAFLLLYI), 275–295 (LCYSITATWGSITADYYILFP), 303–323 (IFCLTFFGTFLPTCFVGILGL), 363–383 (VVVLVFSLVSNNIINTYSAAF), 395–415 (IPRWFWSIVCTIICLVCALIG), 422–442 (ILGNFLPMIGYWISMYFILLF), 520–540 (FAFIVGVAGVVVGMAQAYWIG), and 546–566 (FGEYGGDVAMWLSMAFSGVVY).

This sequence belongs to the purine-cytosine permease (2.A.39) family.

It is found in the membrane. Thiamine-regulated, high affinity import carrier of pyridoxine, pyridoxal and pyridoxamine. The chain is Vitamin B6 transporter TPN1 (TPN1) from Saccharomyces cerevisiae (Baker's yeast).